Here is a 146-residue protein sequence, read N- to C-terminus: Myoglobin (146 aa).

In terms of domain architecture, Globin spans 2–140 (ADLDAVLKCW…VIADLEANYK (139 aa)). Histidine 59 is a nitrite binding site. Histidine 59 is a binding site for O2. Histidine 88 provides a ligand contact to heme b.

This sequence belongs to the globin family. Monomeric.

The protein resides in the cytoplasm. Its subcellular location is the sarcoplasm. It carries out the reaction Fe(III)-heme b-[protein] + nitric oxide + H2O = Fe(II)-heme b-[protein] + nitrite + 2 H(+). It catalyses the reaction H2O2 + AH2 = A + 2 H2O. Its function is as follows. Monomeric heme protein which primary function is to store oxygen and facilitate its diffusion within muscle tissues. Reversibly binds oxygen through a pentacoordinated heme iron and enables its timely and efficient release as needed during periods of heightened demand. Depending on the oxidative conditions of tissues and cells, and in addition to its ability to bind oxygen, it also has a nitrite reductase activity whereby it regulates the production of bioactive nitric oxide. Under stress conditions, like hypoxia and anoxia, it also protects cells against reactive oxygen species thanks to its pseudoperoxidase activity. In Katsuwonus pelamis (Skipjack tuna), this protein is Myoglobin (mb).